A 564-amino-acid polypeptide reads, in one-letter code: Ribulokinase (564 aa).

This sequence belongs to the ribulokinase family.

The catalysed reaction is D-ribulose + ATP = D-ribulose 5-phosphate + ADP + H(+). It carries out the reaction L-ribulose + ATP = L-ribulose 5-phosphate + ADP + H(+). Its pathway is carbohydrate degradation; L-arabinose degradation via L-ribulose; D-xylulose 5-phosphate from L-arabinose (bacterial route): step 2/3. The sequence is that of Ribulokinase from Anoxybacillus flavithermus (strain DSM 21510 / WK1).